Here is a 146-residue protein sequence, read N- to C-terminus: Putative type II restriction enzyme MjaORF1200P (146 aa).

This sequence to A.pernix APE2001.

The enzyme catalyses Endonucleolytic cleavage of DNA to give specific double-stranded fragments with terminal 5'-phosphates.. A putative type II restriction enzyme, its methylase would be M.MjaORF1200P (AC Q58600). This Methanocaldococcus jannaschii (strain ATCC 43067 / DSM 2661 / JAL-1 / JCM 10045 / NBRC 100440) (Methanococcus jannaschii) protein is Putative type II restriction enzyme MjaORF1200P.